The following is a 68-amino-acid chain: Large ribosomal subunit protein bL32 (68 aa).

Residues M1–D20 are disordered.

This sequence belongs to the bacterial ribosomal protein bL32 family.

This Cereibacter sphaeroides (strain ATCC 17029 / ATH 2.4.9) (Rhodobacter sphaeroides) protein is Large ribosomal subunit protein bL32.